An 86-amino-acid polypeptide reads, in one-letter code: Probable acyl carrier protein CCNA_01221 (86 aa).

The region spanning 6–83 (TVTDLSLREI…DLSKLINDLR (78 aa)) is the Carrier domain. An O-(pantetheine 4'-phosphoryl)serine modification is found at serine 43.

Belongs to the acyl carrier protein (ACP) family.

It participates in lipid metabolism; sphingolipid metabolism. In terms of biological role, involved in de novo bacterial ceramide synthesis. The chain is Probable acyl carrier protein CCNA_01221 from Caulobacter vibrioides (strain NA1000 / CB15N) (Caulobacter crescentus).